A 416-amino-acid chain; its full sequence is uncharacterized protein (416 aa).

Residues Cys63, Cys75, Cys78, and Cys152 each coordinate [4Fe-4S] cluster. Positions 253, 280, 300, and 348 each coordinate S-adenosyl-L-methionine. The Nucleophile role is filled by Cys374.

This sequence belongs to the class I-like SAM-binding methyltransferase superfamily. RNA M5U methyltransferase family.

This is an uncharacterized protein from Agrobacterium fabrum (strain C58 / ATCC 33970) (Agrobacterium tumefaciens (strain C58)).